The chain runs to 662 residues: ABC transporter G family member 17 (662 aa).

Residues 22–276 (LAFNDLTYNV…FSEFGSPIPE (255 aa)) enclose the ABC transporter domain. An ATP-binding site is contributed by 69-76 (GASGAGKS). One can recognise an ABC transmembrane type-2 domain in the interval 356 to 566 (VETVILAKRY…PYEAVLHNEF (211 aa)). 6 helical membrane passes run 375–395 (LIGT…TVYW), 410–430 (FFSF…PAFI), 451–471 (VISH…GFAA), 486–508 (FIYY…TFVS), 514–536 (VMMS…GFYV), and 635–655 (LWVT…SLLL).

Belongs to the ABC transporter superfamily. ABCG family. Eye pigment precursor importer (TC 3.A.1.204) subfamily.

The protein resides in the membrane. The sequence is that of ABC transporter G family member 17 (ABCG17) from Arabidopsis thaliana (Mouse-ear cress).